The following is a 322-amino-acid chain: MITNRQQSILNAIVEDYVDYGLPVGSKTVIERHQVNVSPATIRNEMKILEGMGLIEKAHASSGRSPSIKGFRYYVDQLLENTSPRTEFNNQRLNKLLADYNYNLSNALSVYANELSMSTKYTTLIMKPNQSKDLITDVHLFNTVAHLVIMVIVFESGNVEHLQLAVPEKISKNRLVQIANYIKSIFNADMRNDFSDETFMHSNDYLIVNQLIDLLNQRLNDITTDIFFGGKANLIDTLNEQNVNSIQQILQYLESNKILKLFEDDNHSGIDVKIGQEIDNGLEDISIILSDYHIDNHLKGHVAVIGPTAMRYQNVIQLLYKV.

Belongs to the HrcA family.

Negative regulator of class I heat shock genes (grpE-dnaK-dnaJ and groELS operons). Prevents heat-shock induction of these operons. This Staphylococcus carnosus (strain TM300) protein is Heat-inducible transcription repressor HrcA.